The sequence spans 531 residues: NAD(P)H-quinone oxidoreductase chain 4 (531 aa).

14 consecutive transmembrane segments (helical) span residues 9-29, 41-61, 93-113, 117-137, 141-161, 173-193, 217-237, 248-268, 282-302, 311-331, 337-357, 381-401, 422-442, and 469-489; these read FPWL…IPFF, FALS…INGF, MPLI…AWPV, PKLF…VFAV, LLFF…LAIW, FIIY…AMGF, IFCY…VPLH, TAPV…YALL, FAPL…LTSF, IAYS…SFSS, AMLQ…LVGA, FALW…SGFV, VVMA…LLSM, and VYII…PRLV.

The protein belongs to the complex I subunit 4 family.

It localises to the cellular thylakoid membrane. It catalyses the reaction a plastoquinone + NADH + (n+1) H(+)(in) = a plastoquinol + NAD(+) + n H(+)(out). The catalysed reaction is a plastoquinone + NADPH + (n+1) H(+)(in) = a plastoquinol + NADP(+) + n H(+)(out). Its function is as follows. NDH-1 shuttles electrons from NAD(P)H, via FMN and iron-sulfur (Fe-S) centers, to quinones in the respiratory chain. The immediate electron acceptor for the enzyme in this species is believed to be plastoquinone. Couples the redox reaction to proton translocation (for every two electrons transferred, four hydrogen ions are translocated across the cytoplasmic membrane), and thus conserves the redox energy in a proton gradient. The polypeptide is NAD(P)H-quinone oxidoreductase chain 4 (Prochlorococcus marinus (strain MIT 9301)).